The following is a 165-amino-acid chain: Small ribosomal subunit protein uS5 (165 aa).

The 64-residue stretch at 10–73 (LVEKLVAVDR…EAARRNMITV (64 aa)) folds into the S5 DRBM domain.

The protein belongs to the universal ribosomal protein uS5 family. As to quaternary structure, part of the 30S ribosomal subunit. Contacts proteins S4 and S8.

With S4 and S12 plays an important role in translational accuracy. In terms of biological role, located at the back of the 30S subunit body where it stabilizes the conformation of the head with respect to the body. In Acinetobacter baylyi (strain ATCC 33305 / BD413 / ADP1), this protein is Small ribosomal subunit protein uS5.